The chain runs to 512 residues: MLFEGLDLVSALATLAACLVSVTLLLAVSQQLWQLRWAATRDKSCKLPIPKGSMGFPLIGETGHWLLQGSGFQSSRREKYGNVFKTHLLGRPLIRVTGAENVRKILMGEHHLVSTEWPRSTRMLLGPNTVSNSIGDIHRNKRKVFSKIFSHEALESYLPKIQLVIQDTLRAWSSHPEAINVYQEAQKLTFRMAIRVLLGFSIPEEDLGHLFEVYQQFVDNVFSLPVDLPFSGYRRGIQARQILQKGLEKAIREKLQCTQGKDYLDALDLLIESSKEHGKEMTMQELKDGTLELIFAAYATTASASTSLIMQLLKHPTVLEKLRDELRAHGILHSGGCPCEGTLRLDTLSGLRYLDCVIKEVMRLFTPISGGYRTVLQTFELDGFQIPKGWSVMYSIRDTHDTAPVFKDVNVFDPDRFSQARSEDKDGRFHYLPFGGGVRTCLGKHLAKLFLKVLAVELASTSRFELATRTFPRITLVPVLHPVDGLSVKFFGLDSNQNEILPETEAMLSATV.

Cys441 contributes to the heme binding site.

It belongs to the cytochrome P450 family. The cofactor is heme. Highly expressed in brain, particularly in the cerebellum and pons.

The protein resides in the endoplasmic reticulum membrane. Its subcellular location is the microsome membrane. The catalysed reaction is all-trans-retinoate + reduced [NADPH--hemoprotein reductase] + O2 = all-trans-4-hydroxyretinoate + oxidized [NADPH--hemoprotein reductase] + H2O + H(+). The enzyme catalyses all-trans-retinoate + reduced [NADPH--hemoprotein reductase] + O2 = all-trans-18-hydroxyretinoate + oxidized [NADPH--hemoprotein reductase] + H2O + H(+). In terms of biological role, a cytochrome P450 monooxygenase involved in the metabolism of retinoates (RAs), the active metabolites of vitamin A, and critical signaling molecules in animals. RAs exist as at least four different isomers: all-trans-RA (atRA), 9-cis-RA, 13-cis-RA, and 9,13-dicis-RA, where atRA is considered to be the biologically active isomer, although 9-cis-RA and 13-cis-RA also have activity. Catalyzes the hydroxylation of atRA primarily at C-4 and C-18, thereby contributing to the regulation of atRA homeostasis and signaling. Hydroxylation of atRA limits its biological activity and initiates a degradative process leading to its eventual elimination. Involved in the convertion of atRA to all-trans-4-oxo-RA. Can oxidize all-trans-13,14-dihydroretinoate (DRA) to metabolites which could include all-trans-4-oxo-DRA, all-trans-4-hydroxy-DRA, all-trans-5,8-epoxy-DRA, and all-trans-18-hydroxy-DRA. Shows preference for the following substrates: atRA &gt; 9-cis-RA &gt; 13-cis-RA. Plays a central role in germ cell development: acts by degrading RAs in the developing testis, preventing STRA8 expression, thereby leading to delay of meiosis. Required for the maintenance of the undifferentiated state of male germ cells during embryonic development in Sertoli cells, inducing arrest in G0 phase of the cell cycle and preventing meiotic entry. Plays a role in skeletal development, both at the level of patterning and in the ossification of bone and the establishment of some synovial joints. Essential for postnatal survival. Its function is as follows. Also has a significant activity in oxidation of tazarotenic acid and may therefore metabolize that xenobiotic in vivo. The protein is Cytochrome P450 26B1 (CYP26B1) of Homo sapiens (Human).